Here is a 316-residue protein sequence, read N- to C-terminus: Adenine deaminase (316 aa).

Zn(2+)-binding residues include histidine 14, histidine 16, and histidine 194. The Proton donor role is filled by glutamate 197. Position 275 (aspartate 275) interacts with Zn(2+). Aspartate 276 serves as a coordination point for substrate.

The protein belongs to the metallo-dependent hydrolases superfamily. Adenosine and AMP deaminases family. Adenine deaminase type 2 subfamily. Zn(2+) serves as cofactor.

It carries out the reaction adenine + H2O + H(+) = hypoxanthine + NH4(+). In terms of biological role, catalyzes the hydrolytic deamination of adenine to hypoxanthine. Plays an important role in the purine salvage pathway and in nitrogen catabolism. The protein is Adenine deaminase of Bordetella avium (strain 197N).